A 669-amino-acid chain; its full sequence is Dymeclin (669 aa).

The N-myristoyl glycine moiety is linked to residue Gly-2.

It belongs to the dymeclin family. In terms of processing, myristoylated in vitro; myristoylation is not essential for protein targeting to Golgi compartment.

The protein localises to the cytoplasm. The protein resides in the golgi apparatus. In terms of biological role, necessary for correct organization of Golgi apparatus. In Xenopus laevis (African clawed frog), this protein is Dymeclin (dym).